Here is a 195-residue protein sequence, read N- to C-terminus: Cysteine/O-acetylserine efflux protein (195 aa).

Residues 1–9 are Periplasmic-facing; the sequence is MTPMLLSAF. A helical membrane pass occupies residues 10 to 32; that stretch reads WTYTLITALTPGPNNILALSAAT. At 33–46 the chain is on the cytoplasmic side; that stretch reads AHGFRQSIRVLAGM. A helical membrane pass occupies residues 47–67; the sequence is SLGFLVVMLLCAGIAFSLAVI. Topologically, residues 68–69 are periplasmic; the sequence is DP. Residues 70 to 90 traverse the membrane as a helical segment; the sequence is AIIHLLSWVGAAYILWLAWKI. Residues 91–104 lie on the Cytoplasmic side of the membrane; that stretch reads ATSPAADENARPKP. The chain crosses the membrane as a helical span at residues 105–125; sequence VGFWVSFGLQFVNVKIILYGI. Residues 126 to 141 lie on the Periplasmic side of the membrane; the sequence is TALSTFVLPQTQALNW. The helical transmembrane segment at 142-162 threads the bilayer; it reads VIGVSILLALIGTFGNVCWAL. Residues 163-176 lie on the Cytoplasmic side of the membrane; sequence AGHLFQRAFRHYGR. A helical membrane pass occupies residues 177 to 194; sequence QLNIILALLLVYCAVRIF. Tyrosine 195 is a topological domain (periplasmic).

Belongs to the Rht family.

It is found in the cell inner membrane. It carries out the reaction O-acetyl-L-serine(in) = O-acetyl-L-serine(out). The catalysed reaction is L-cysteine(in) = L-cysteine(out). Functionally, exporter of O-acetylserine (OAS) and cysteine. This is Cysteine/O-acetylserine efflux protein (eamB) from Salmonella choleraesuis (strain SC-B67).